The chain runs to 81 residues: Antimicrobial peptide D1 (81 aa).

Positions 1 to 31 are cleaved as a signal peptide; sequence MAKTVLGIHVTFLTLLFAVLLLNDVMYTPVE. Disulfide bonds link Cys34-Cys81, Cys45-Cys66, Cys51-Cys75, and Cys55-Cys77.

Functionally, antimicrobial peptide probably active against fungi like B.sorokiniana, F.oxysporum, F.graminearum, F.avenaceum, B.cinerea, P.beta, P.infestans and P.debaryanum. The protein is Antimicrobial peptide D1 of Stellaria media (Common chickweed).